A 204-amino-acid chain; its full sequence is Elongation factor Ts (204 aa).

An involved in Mg(2+) ion dislocation from EF-Tu region spans residues 87-90 (TDFV).

This sequence belongs to the EF-Ts family.

It is found in the cytoplasm. Its function is as follows. Associates with the EF-Tu.GDP complex and induces the exchange of GDP to GTP. It remains bound to the aminoacyl-tRNA.EF-Tu.GTP complex up to the GTP hydrolysis stage on the ribosome. The sequence is that of Elongation factor Ts from Frankia casuarinae (strain DSM 45818 / CECT 9043 / HFP020203 / CcI3).